We begin with the raw amino-acid sequence, 388 residues long: Succinate--CoA ligase [ADP-forming] subunit beta (388 aa).

One can recognise an ATP-grasp domain in the interval 9–244 (KQLFAEFGLP…PSQEDKREAH (236 aa)). ATP contacts are provided by residues lysine 46, 53-55 (GRG), glutamate 99, serine 102, and glutamate 107. The Mg(2+) site is built by asparagine 199 and aspartate 213. Substrate-binding positions include asparagine 264 and 321-323 (GIV).

It belongs to the succinate/malate CoA ligase beta subunit family. In terms of assembly, heterotetramer of two alpha and two beta subunits. Mg(2+) is required as a cofactor.

The catalysed reaction is succinate + ATP + CoA = succinyl-CoA + ADP + phosphate. It carries out the reaction GTP + succinate + CoA = succinyl-CoA + GDP + phosphate. It participates in carbohydrate metabolism; tricarboxylic acid cycle; succinate from succinyl-CoA (ligase route): step 1/1. Functionally, succinyl-CoA synthetase functions in the citric acid cycle (TCA), coupling the hydrolysis of succinyl-CoA to the synthesis of either ATP or GTP and thus represents the only step of substrate-level phosphorylation in the TCA. The beta subunit provides nucleotide specificity of the enzyme and binds the substrate succinate, while the binding sites for coenzyme A and phosphate are found in the alpha subunit. In Vibrio vulnificus (strain CMCP6), this protein is Succinate--CoA ligase [ADP-forming] subunit beta.